The chain runs to 230 residues: U2 small nuclear ribonucleoprotein A' (230 aa).

3 LRR repeats span residues 19–40, 41–62, and 65–86; these read KDRE…PFFP, RLRM…LANS, and GLTT…DPLR. Positions 99-137 constitute an LRRCT domain; sequence NPVTRKEYYRLWIIWRIPSVRFLDYQKVKDAERAKAAEL. Positions 211–230 are disordered; sequence GRIPGGALDGAGNDGDQMQL. Residues 213 to 223 show a composition bias toward gly residues; that stretch reads IPGGALDGAGN.

The protein belongs to the U2 small nuclear ribonucleoprotein A family. As to quaternary structure, associated with the spliceosome.

The protein localises to the nucleus. Functionally, involved in pre-mRNA splicing. In Emericella nidulans (strain FGSC A4 / ATCC 38163 / CBS 112.46 / NRRL 194 / M139) (Aspergillus nidulans), this protein is U2 small nuclear ribonucleoprotein A' (lea1).